The chain runs to 72 residues: Large ribosomal subunit protein uL29 (72 aa).

The protein belongs to the universal ribosomal protein uL29 family.

In Prochlorococcus marinus (strain MIT 9515), this protein is Large ribosomal subunit protein uL29.